We begin with the raw amino-acid sequence, 163 residues long: MSEKIAVVPGSFDPVTFGHLDIIKRAADVFDIVYVAVLNNSAKNPLFSVEERMALMAEVTKALPNVRIESSSGLLIDYAKEKKAKAIVRGLRAVSDFEYEMQITSMNRFLDETIETFFIMTKNQYSFLSSSIVKEVAKYGSDVNELVPDCVVQALKEKYGFSQ.

Residue S11 coordinates substrate. ATP is bound by residues 11 to 12 (SF) and H19. Residues K43, L75, and R89 each contribute to the substrate site. ATP-binding positions include 90-92 (GLR), E100, and 125-131 (YSFLSSS).

The protein belongs to the bacterial CoaD family. As to quaternary structure, homohexamer. Mg(2+) serves as cofactor.

The protein resides in the cytoplasm. The enzyme catalyses (R)-4'-phosphopantetheine + ATP + H(+) = 3'-dephospho-CoA + diphosphate. It functions in the pathway cofactor biosynthesis; coenzyme A biosynthesis; CoA from (R)-pantothenate: step 4/5. In terms of biological role, reversibly transfers an adenylyl group from ATP to 4'-phosphopantetheine, yielding dephospho-CoA (dPCoA) and pyrophosphate. The sequence is that of Phosphopantetheine adenylyltransferase from Lysinibacillus sphaericus (strain C3-41).